A 195-amino-acid chain; its full sequence is Large ribosomal subunit protein bL25 (195 aa).

It belongs to the bacterial ribosomal protein bL25 family. CTC subfamily. Part of the 50S ribosomal subunit; part of the 5S rRNA/L5/L18/L25 subcomplex. Contacts the 5S rRNA. Binds to the 5S rRNA independently of L5 and L18.

Functionally, this is one of the proteins that binds to the 5S RNA in the ribosome where it forms part of the central protuberance. This chain is Large ribosomal subunit protein bL25, found in Geobacter metallireducens (strain ATCC 53774 / DSM 7210 / GS-15).